Consider the following 299-residue polypeptide: NAD kinase (299 aa).

Aspartate 71 serves as the catalytic Proton acceptor. NAD(+)-binding positions include 71-72 (DG), 145-146 (ND), arginine 173, aspartate 175, 186-191 (TAYSLS), alanine 210, and glutamine 248.

Belongs to the NAD kinase family. Requires a divalent metal cation as cofactor.

It localises to the cytoplasm. The catalysed reaction is NAD(+) + ATP = ADP + NADP(+) + H(+). Functionally, involved in the regulation of the intracellular balance of NAD and NADP, and is a key enzyme in the biosynthesis of NADP. Catalyzes specifically the phosphorylation on 2'-hydroxyl of the adenosine moiety of NAD to yield NADP. The sequence is that of NAD kinase from Bordetella bronchiseptica (strain ATCC BAA-588 / NCTC 13252 / RB50) (Alcaligenes bronchisepticus).